The primary structure comprises 334 residues: Chorismatase (334 aa).

Substrate is bound by residues Tyr143, Arg150, Tyr203, and Arg216. Glu328 serves as the catalytic Proton acceptor.

The protein belongs to the FkbO/Hyg5 family. Monomer.

It catalyses the reaction chorismate + H2O = (3R,4R)-3,4-dihydroxy-3,4-dihydrobenzoate + pyruvate. In terms of biological role, involved in the biosynthesis of the macrocyclic amino acid-linked polyketides rapamycin which is a potent immunosuppressant that prevents T-cell proliferation through initial binding to the immunophilin FKBP12. Catalyzes the hydrolysis of chorismate via a 1,4-conjugate elimination of water to yield (4R,5R)-4,5-dihydroxycyclohexa-1,5-dienecarboxylic acid (DCDC). This chain is Chorismatase (rapK), found in Streptomyces rapamycinicus (strain ATCC 29253 / DSM 41530 / NRRL 5491 / AYB-994) (Streptomyces hygroscopicus (strain ATCC 29253)).